The sequence spans 599 residues: Elongation factor 4 (599 aa).

The tr-type G domain maps to 2–185; sequence ENIRNFSIIA…AITKRIPPPK (184 aa). GTP contacts are provided by residues 14–19 and 132–135; these read DHGKST and NKID.

The protein belongs to the TRAFAC class translation factor GTPase superfamily. Classic translation factor GTPase family. LepA subfamily.

The protein localises to the cell inner membrane. It carries out the reaction GTP + H2O = GDP + phosphate + H(+). In terms of biological role, required for accurate and efficient protein synthesis under certain stress conditions. May act as a fidelity factor of the translation reaction, by catalyzing a one-codon backward translocation of tRNAs on improperly translocated ribosomes. Back-translocation proceeds from a post-translocation (POST) complex to a pre-translocation (PRE) complex, thus giving elongation factor G a second chance to translocate the tRNAs correctly. Binds to ribosomes in a GTP-dependent manner. The chain is Elongation factor 4 from Hydrogenobaculum sp. (strain Y04AAS1).